The following is a 347-amino-acid chain: NADH-ubiquinone oxidoreductase chain 2 (347 aa).

Transmembrane regions (helical) follow at residues 1 to 21 (MTPM…TLTL), 26 to 46 (WLLM…LLTY), 56 to 76 (AIKY…AASL), 96 to 116 (GIMT…YWVP), 153 to 171 (ILLT…NGLN), 178 to 198 (VMAY…IYFP), 199 to 219 (TLTT…FTVF), 237 to 257 (APIM…LPPL), 277 to 297 (IMAT…MRII), and 326 to 346 (LPTL…FITL).

The protein belongs to the complex I subunit 2 family. In terms of assembly, core subunit of respiratory chain NADH dehydrogenase (Complex I) which is composed of 45 different subunits. Interacts with TMEM242.

The protein resides in the mitochondrion inner membrane. The catalysed reaction is a ubiquinone + NADH + 5 H(+)(in) = a ubiquinol + NAD(+) + 4 H(+)(out). Functionally, core subunit of the mitochondrial membrane respiratory chain NADH dehydrogenase (Complex I) which catalyzes electron transfer from NADH through the respiratory chain, using ubiquinone as an electron acceptor. Essential for the catalytic activity and assembly of complex I. In Ornithorhynchus anatinus (Duckbill platypus), this protein is NADH-ubiquinone oxidoreductase chain 2.